We begin with the raw amino-acid sequence, 179 residues long: Protein GrpE (179 aa).

The interval 1–20 is disordered; sequence MSEETKEEIKNEKVDEEVTE.

Belongs to the GrpE family. In terms of assembly, homodimer.

Its subcellular location is the cytoplasm. Functionally, participates actively in the response to hyperosmotic and heat shock by preventing the aggregation of stress-denatured proteins, in association with DnaK and GrpE. It is the nucleotide exchange factor for DnaK and may function as a thermosensor. Unfolded proteins bind initially to DnaJ; upon interaction with the DnaJ-bound protein, DnaK hydrolyzes its bound ATP, resulting in the formation of a stable complex. GrpE releases ADP from DnaK; ATP binding to DnaK triggers the release of the substrate protein, thus completing the reaction cycle. Several rounds of ATP-dependent interactions between DnaJ, DnaK and GrpE are required for fully efficient folding. The chain is Protein GrpE from Lactococcus lactis subsp. cremoris (strain MG1363).